A 128-amino-acid polypeptide reads, in one-letter code: Probable 4-amino-4-deoxy-L-arabinose-phosphoundecaprenol flippase subunit ArnF (128 aa).

Residues 1 to 2 (MG) are Cytoplasmic-facing. The chain crosses the membrane as a helical span at residues 3–23 (LMWGLFSVIIASAAQLSLGFA). The Periplasmic segment spans residues 24-35 (ASHLPPMTHLWD). Residues 36 to 56 (FIAALLAFGLDARILLLGLLG) traverse the membrane as a helical segment. The Cytoplasmic segment spans residues 57-76 (YLLSVFCWYKTLHKLALSKA). The chain crosses the membrane as a helical span at residues 77–97 (YALLSMSYVLVWIASMILPGW). Over 98–100 (EGT) the chain is Periplasmic. A helical transmembrane segment spans residues 101–121 (FSLKALLGVACIMSGLMLIFL). At 122 to 128 (PTTKQRY) the chain is on the cytoplasmic side.

The protein belongs to the ArnF family. Heterodimer of ArnE and ArnF.

The protein localises to the cell inner membrane. It functions in the pathway bacterial outer membrane biogenesis; lipopolysaccharide biosynthesis. Functionally, translocates 4-amino-4-deoxy-L-arabinose-phosphoundecaprenol (alpha-L-Ara4N-phosphoundecaprenol) from the cytoplasmic to the periplasmic side of the inner membrane. In Escherichia coli O17:K52:H18 (strain UMN026 / ExPEC), this protein is Probable 4-amino-4-deoxy-L-arabinose-phosphoundecaprenol flippase subunit ArnF.